We begin with the raw amino-acid sequence, 242 residues long: Small ribosomal subunit protein uS2 (242 aa).

This sequence belongs to the universal ribosomal protein uS2 family.

The sequence is that of Small ribosomal subunit protein uS2 from Photobacterium profundum (strain SS9).